The following is a 601-amino-acid chain: Probable translation initiation factor IF-2 (601 aa).

The region spanning 10–227 is the tr-type G domain; the sequence is LRAPIVVVLG…VLAGLAQRYL (218 aa). The G1 stretch occupies residues 19–26; it reads GHVDAGKT. 19–26 is a binding site for GTP; that stretch reads GHVDAGKT. Residues 44–48 form a G2 region; it reads TMTQH. The interval 83-86 is G3; that stretch reads DTPG. GTP contacts are provided by residues 83–87 and 137–140; these read DTPGH and NKID. A G4 region spans residues 137 to 140; that stretch reads NKID. A G5 region spans residues 205 to 207; it reads SAV.

Belongs to the TRAFAC class translation factor GTPase superfamily. Classic translation factor GTPase family. IF-2 subfamily.

Function in general translation initiation by promoting the binding of the formylmethionine-tRNA to ribosomes. Seems to function along with eIF-2. In Thermofilum pendens (strain DSM 2475 / Hrk 5), this protein is Probable translation initiation factor IF-2.